Reading from the N-terminus, the 360-residue chain is DNA replication and repair protein RecF (360 aa).

Position 33–40 (33–40) interacts with ATP; sequence GENGSGKT.

The protein belongs to the RecF family.

It localises to the cytoplasm. Its function is as follows. The RecF protein is involved in DNA metabolism; it is required for DNA replication and normal SOS inducibility. RecF binds preferentially to single-stranded, linear DNA. It also seems to bind ATP. This Rickettsia typhi (strain ATCC VR-144 / Wilmington) protein is DNA replication and repair protein RecF.